The sequence spans 267 residues: Integral membrane protein 2C (267 aa).

Thr-37 carries the phosphothreonine modification. Residues 55–75 form a helical; Signal-anchor for type II membrane protein membrane-spanning segment; sequence VGGVCYLSMGMVVLLMGLVFA. The region spanning 136 to 230 is the BRICHOS domain; the sequence is FGGGDPADII…LCNGKDTYRL (95 aa). An intrachain disulfide couples Cys-163 to Cys-222. Residue Asn-169 is glycosylated (N-linked (GlcNAc...) asparagine).

It belongs to the ITM2 family. Interacts with BACE1. Interacts with APP. Interacts with STMN2. In terms of processing, type I membrane-bound, as well as soluble, furin has a pre-eminent role in ITM2C proteolytic processing. PCSK7 and PCSK5 may also be involved although to a lesser extent. The soluble form of PCSK7 is incapable of processing ITM2C. Fails to undergo shedding by ADAM10 and intramembrane cleavage by SPPL2B. High levels in the brain, specifically in the cerebral cortex, medulla, amygdala, hippocampus, thalamus, caudate nucleus, cerebellum, olfactory lobe and spinal cord. Very low levels in other organs.

It is found in the lysosome membrane. The protein resides in the cell membrane. In terms of biological role, negative regulator of amyloid-beta peptide production. May inhibit the processing of APP by blocking its access to alpha- and beta-secretase. Binding to the beta-secretase-cleaved APP C-terminal fragment is negligible, suggesting that ITM2C is a poor gamma-secretase cleavage inhibitor. May play a role in TNF-induced cell death and neuronal differentiation. This chain is Integral membrane protein 2C (ITM2C), found in Homo sapiens (Human).